Here is a 166-residue protein sequence, read N- to C-terminus: Transcriptional repressor NrdR (166 aa).

A zinc finger lies at 3–34; that stretch reads CPFCHFVETDVIDTRKLYEGEVIRRRRRCRAC. Residues 49 to 139 enclose the ATP-cone domain; sequence LMVVKKDGTR…VYRAFTDIGK (91 aa).

This sequence belongs to the NrdR family. The cofactor is Zn(2+).

Its function is as follows. Negatively regulates transcription of bacterial ribonucleotide reductase nrd genes and operons by binding to NrdR-boxes. The sequence is that of Transcriptional repressor NrdR from Chloroflexus aurantiacus (strain ATCC 29364 / DSM 637 / Y-400-fl).